We begin with the raw amino-acid sequence, 394 residues long: Argininosuccinate synthase (394 aa).

Residue 8-16 (AYSGGLDTS) coordinates ATP. The L-citrulline site is built by Tyr-86 and Ser-91. An ATP-binding site is contributed by Gly-116. Residues Thr-118, Asn-122, and Asp-123 each contribute to the L-aspartate site. L-citrulline is bound at residue Asn-122. L-citrulline-binding residues include Arg-126, Ser-172, Ser-181, Glu-256, and Tyr-268.

Belongs to the argininosuccinate synthase family. Type 1 subfamily. As to quaternary structure, homotetramer.

The protein resides in the cytoplasm. It catalyses the reaction L-citrulline + L-aspartate + ATP = 2-(N(omega)-L-arginino)succinate + AMP + diphosphate + H(+). It functions in the pathway amino-acid biosynthesis; L-arginine biosynthesis; L-arginine from L-ornithine and carbamoyl phosphate: step 2/3. This Methanococcoides burtonii (strain DSM 6242 / NBRC 107633 / OCM 468 / ACE-M) protein is Argininosuccinate synthase.